A 465-amino-acid chain; its full sequence is MLDDRARMEAAKKEKVEQILAEFQLQEEDLKKVMRRMQKEMDRGLRLETHEEASVKMLPTYVRSTPEGSEVGDFLSLDLGGTNFRVMLVKVGEGEEGQWSVKTKHQMYSIPEDAMTGTAEMLFDYISECISDFLDKHQMKHKKLPLGFTFSFPVRHEDIDKGILLNWTKGFKASGAEGNNVVGLLRDAIKRRGDFEMDVVAMVNDTVATMISCYYEDHQCEVGMIVGTGCNACYMEEMQNVELVEGDEGRMCVNTEWGAFGDSGELDEFLLEYDRLVDESSANPGQQLYEKLIGGKYMGELVRLVLLRLVDENLLFHGEASEQLRTRGAFETRFVSQVESDTGDRKQIYNILSTLGLRPSTTDCDIVRRACESVSTRAAHMCSAGLAGVINRMRESRSEDVMRITVGVDGSVYKLHPSFKERFHASVRRLTPSCEITFIESEEGSGRGAALVSAVACKKACMLGQ.

Residues 10–454 (AAKKEKVEQI…SGRGAALVSA (445 aa)) form the Hexokinase domain. The interval 67 to 203 (EGSEVGDFLS…DFEMDVVAMV (137 aa)) is hexokinase small subdomain. ATP is bound at residue 78 to 83 (DLGGTN). Residues 151 to 152 (SF), 168 to 169 (TK), and 204 to 205 (ND) contribute to the substrate site. The segment at 204-443 (NDTVATMISC…CEITFIESEE (240 aa)) is hexokinase large subdomain. Threonine 228 contributes to the ATP binding site. The substrate site is built by asparagine 231, glutamate 256, and glutamate 290. ATP contacts are provided by residues 295 to 296 (GK), 332 to 336 (TRFVS), and 411 to 415 (SVYKL).

It belongs to the hexokinase family. In terms of assembly, monomer. Interacts with MIDN; the interaction occurs preferentially at low glucose levels and results in inhibition of hexokinase activity. Interacts with GCKR; leading to sequestration in the nucleus.

Its subcellular location is the cytoplasm. It localises to the nucleus. The protein localises to the mitochondrion. The catalysed reaction is a D-hexose + ATP = a D-hexose 6-phosphate + ADP + H(+). It catalyses the reaction D-fructose + ATP = D-fructose 6-phosphate + ADP + H(+). It carries out the reaction D-glucose + ATP = D-glucose 6-phosphate + ADP + H(+). The enzyme catalyses D-mannose + ATP = D-mannose 6-phosphate + ADP + H(+). Its pathway is carbohydrate metabolism; hexose metabolism. It functions in the pathway carbohydrate degradation; glycolysis; D-glyceraldehyde 3-phosphate and glycerone phosphate from D-glucose: step 1/4. Subject to allosteric regulation. Low glucose and high fructose-6-phosphate triggers association with the inhibitor GCKR followed by sequestration in the nucleus. Its function is as follows. Catalyzes the phosphorylation of hexose, such as D-glucose, D-fructose and D-mannose, to hexose 6-phosphate (D-glucose 6-phosphate, D-fructose 6-phosphate and D-mannose 6-phosphate, respectively). Compared to other hexokinases, has a weak affinity for D-glucose, and is effective only when glucose is abundant. Mainly expressed in pancreatic beta cells and the liver and constitutes a rate-limiting step in glucose metabolism in these tissues. Since insulin secretion parallels glucose metabolism and the low glucose affinity of GCK ensures that it can change its enzymatic activity within the physiological range of glucose concentrations, GCK acts as a glucose sensor in the pancreatic beta cell. In pancreas, plays an important role in modulating insulin secretion. In liver, helps to facilitate the uptake and conversion of glucose by acting as an insulin-sensitive determinant of hepatic glucose usage. Required to provide D-glucose 6-phosphate for the synthesis of glycogen. Mediates the initial step of glycolysis by catalyzing phosphorylation of D-glucose to D-glucose 6-phosphate. This Homo sapiens (Human) protein is Hexokinase-4.